The chain runs to 569 residues: CTP synthase (569 aa).

The tract at residues 1-272 is amidoligase domain; it reads MARPKNVKHI…DSRVLKKLGI (272 aa). Serine 18 provides a ligand contact to CTP. Position 18 (serine 18) interacts with UTP. 19–24 contributes to the ATP binding site; the sequence is SLGKGI. Tyrosine 59 contacts L-glutamine. ATP is bound at residue aspartate 76. Mg(2+) is bound by residues aspartate 76 and glutamate 146. Residues 153–155, 193–198, and lysine 229 each bind CTP; these read DIE and KTKPTQ. Residues 193–198 and lysine 229 each bind UTP; that span reads KTKPTQ. One can recognise a Glutamine amidotransferase type-1 domain in the interval 299-543; the sequence is TIGICGKYTE…VAAAKDYARG (245 aa). Glycine 363 is a binding site for L-glutamine. Cysteine 390 functions as the Nucleophile; for glutamine hydrolysis in the catalytic mechanism. Residues 391–394, glutamate 414, and arginine 471 contribute to the L-glutamine site; that span reads LGMQ. Catalysis depends on residues histidine 516 and glutamate 518.

It belongs to the CTP synthase family. Homotetramer.

It catalyses the reaction UTP + L-glutamine + ATP + H2O = CTP + L-glutamate + ADP + phosphate + 2 H(+). The catalysed reaction is L-glutamine + H2O = L-glutamate + NH4(+). The enzyme catalyses UTP + NH4(+) + ATP = CTP + ADP + phosphate + 2 H(+). The protein operates within pyrimidine metabolism; CTP biosynthesis via de novo pathway; CTP from UDP: step 2/2. Allosterically activated by GTP, when glutamine is the substrate; GTP has no effect on the reaction when ammonia is the substrate. The allosteric effector GTP functions by stabilizing the protein conformation that binds the tetrahedral intermediate(s) formed during glutamine hydrolysis. Inhibited by the product CTP, via allosteric rather than competitive inhibition. Catalyzes the ATP-dependent amination of UTP to CTP with either L-glutamine or ammonia as the source of nitrogen. Regulates intracellular CTP levels through interactions with the four ribonucleotide triphosphates. The sequence is that of CTP synthase from Chlorobium chlorochromatii (strain CaD3).